The primary structure comprises 1550 residues: Pentafunctional AROM polypeptide (1550 aa).

The segment at methionine 1 to lysine 379 is 3-dehydroquinate synthase. NAD(+) is bound by residues aspartate 42–asparagine 44, glutamate 80–lysine 83, glycine 111–valine 113, and aspartate 116. Arginine 127 is a 7-phospho-2-dehydro-3-deoxy-D-arabino-heptonate binding site. Residue threonine 136–threonine 137 coordinates NAD(+). 7-phospho-2-dehydro-3-deoxy-D-arabino-heptonate contacts are provided by aspartate 143 and lysine 149. NAD(+) is bound at residue lysine 158. Residue asparagine 159 coordinates 7-phospho-2-dehydro-3-deoxy-D-arabino-heptonate. Residues phenylalanine 176 to threonine 179 and asparagine 187 each bind NAD(+). Glutamate 191 lines the Zn(2+) pocket. 7-phospho-2-dehydro-3-deoxy-D-arabino-heptonate is bound by residues glutamate 191–lysine 194 and lysine 243. The active-site Proton acceptor; for 3-dehydroquinate synthase activity is glutamate 253. Residues arginine 257 to asparagine 261 and histidine 264 each bind 7-phospho-2-dehydro-3-deoxy-D-arabino-heptonate. A Zn(2+)-binding site is contributed by histidine 264. Histidine 268 (proton acceptor; for 3-dehydroquinate synthase activity) is an active-site residue. 2 residues coordinate 7-phospho-2-dehydro-3-deoxy-D-arabino-heptonate: histidine 280 and lysine 351. A Zn(2+)-binding site is contributed by histidine 280. The interval valine 392–isoleucine 837 is EPSP synthase. The segment at aspartate 857–valine 1047 is shikimate kinase. An ATP-binding site is contributed by glycine 864–serine 871. Positions leucine 1048–glutamate 1257 are 3-dehydroquinase. Arginine 1193 functions as the Schiff-base intermediate with substrate; for 3-dehydroquinate dehydratase activity in the catalytic mechanism. The tract at residues alanine 1270 to glutamate 1550 is shikimate dehydrogenase.

This sequence in the N-terminal section; belongs to the sugar phosphate cyclases superfamily. Dehydroquinate synthase family. The protein in the 2nd section; belongs to the EPSP synthase family. In the 3rd section; belongs to the shikimate kinase family. It in the 4th section; belongs to the type-I 3-dehydroquinase family. This sequence in the C-terminal section; belongs to the shikimate dehydrogenase family. Homodimer. It depends on Zn(2+) as a cofactor.

The protein localises to the cytoplasm. It carries out the reaction 7-phospho-2-dehydro-3-deoxy-D-arabino-heptonate = 3-dehydroquinate + phosphate. The enzyme catalyses 3-dehydroquinate = 3-dehydroshikimate + H2O. It catalyses the reaction shikimate + NADP(+) = 3-dehydroshikimate + NADPH + H(+). The catalysed reaction is shikimate + ATP = 3-phosphoshikimate + ADP + H(+). It carries out the reaction 3-phosphoshikimate + phosphoenolpyruvate = 5-O-(1-carboxyvinyl)-3-phosphoshikimate + phosphate. It participates in metabolic intermediate biosynthesis; chorismate biosynthesis; chorismate from D-erythrose 4-phosphate and phosphoenolpyruvate: step 2/7. Its pathway is metabolic intermediate biosynthesis; chorismate biosynthesis; chorismate from D-erythrose 4-phosphate and phosphoenolpyruvate: step 3/7. The protein operates within metabolic intermediate biosynthesis; chorismate biosynthesis; chorismate from D-erythrose 4-phosphate and phosphoenolpyruvate: step 4/7. It functions in the pathway metabolic intermediate biosynthesis; chorismate biosynthesis; chorismate from D-erythrose 4-phosphate and phosphoenolpyruvate: step 5/7. It participates in metabolic intermediate biosynthesis; chorismate biosynthesis; chorismate from D-erythrose 4-phosphate and phosphoenolpyruvate: step 6/7. Its function is as follows. The AROM polypeptide catalyzes 5 consecutive enzymatic reactions in prechorismate polyaromatic amino acid biosynthesis. The sequence is that of Pentafunctional AROM polypeptide from Candida dubliniensis (strain CD36 / ATCC MYA-646 / CBS 7987 / NCPF 3949 / NRRL Y-17841) (Yeast).